The sequence spans 658 residues: UvrABC system protein B (658 aa).

The Helicase ATP-binding domain maps to 26 to 414 (AGLKKGLKHQ…PDVIEQIIRP (389 aa)). 39–46 (GATGTGKT) lines the ATP pocket. Positions 92–115 (YYDYYQPEAYVPQSDTYIEKDASI) match the Beta-hairpin motif. The 163-residue stretch at 430-592 (QIDDLMDEIN…ITPKTIKKEI (163 aa)) folds into the Helicase C-terminal domain. The UVR domain occupies 622 to 658 (DVFIEGMEHEMKEAAKALDFERAAELRDALLEIKAEG).

It belongs to the UvrB family. Forms a heterotetramer with UvrA during the search for lesions. Interacts with UvrC in an incision complex.

The protein resides in the cytoplasm. Its function is as follows. The UvrABC repair system catalyzes the recognition and processing of DNA lesions. A damage recognition complex composed of 2 UvrA and 2 UvrB subunits scans DNA for abnormalities. Upon binding of the UvrA(2)B(2) complex to a putative damaged site, the DNA wraps around one UvrB monomer. DNA wrap is dependent on ATP binding by UvrB and probably causes local melting of the DNA helix, facilitating insertion of UvrB beta-hairpin between the DNA strands. Then UvrB probes one DNA strand for the presence of a lesion. If a lesion is found the UvrA subunits dissociate and the UvrB-DNA preincision complex is formed. This complex is subsequently bound by UvrC and the second UvrB is released. If no lesion is found, the DNA wraps around the other UvrB subunit that will check the other stand for damage. The chain is UvrABC system protein B from Listeria monocytogenes serovar 1/2a (strain ATCC BAA-679 / EGD-e).